Here is a 446-residue protein sequence, read N- to C-terminus: Phosphoglucosamine mutase (446 aa).

Serine 104 (phosphoserine intermediate) is an active-site residue. Mg(2+)-binding residues include serine 104, aspartate 241, aspartate 243, and aspartate 245. Serine 104 is modified (phosphoserine).

The protein belongs to the phosphohexose mutase family. Requires Mg(2+) as cofactor. In terms of processing, activated by phosphorylation.

The enzyme catalyses alpha-D-glucosamine 1-phosphate = D-glucosamine 6-phosphate. Catalyzes the conversion of glucosamine-6-phosphate to glucosamine-1-phosphate. In Teredinibacter turnerae (strain ATCC 39867 / T7901), this protein is Phosphoglucosamine mutase.